The chain runs to 740 residues: NAD(P)H-quinone oxidoreductase subunit 5, chloroplastic (740 aa).

The next 17 helical transmembrane spans lie at 9–29 (WIIPFIPLPVTVLVGLGLLVV), 40–60 (WAFISVLLLSIALLFSINISI), 89–109 (IDSLTSIMLILITTVGIMVLI), 125–145 (FAYLNFFNASMLGLVTSSNLI), 147–167 (IYIFWELVGMCSYLLIGFWFT), 185–205 (GDFGLLLGILGLYWITGSFEF), 219–239 (NTINLFFAALCASLLFLGAIA), 258–278 (TPISALIHAATMVAAGIFLVA), 290–310 (IMYFISLIGIITVLLGATLAL), 327–347 (LGYIMLAMGIGSYRAALFHLI), 354–374 (ALLFLGSGSIIHSMEPIVGYS), 396–416 (TTFLLGTLSLCGIPPLACFWS), 425–445 (WLYSPIFAIIAYSTAGLTAFY), 521–538 (MFSFSIFFGNEIVFPYPH), 545–565 (LLSVCVLGLFTLFVGFIGIPL), 599–619 (FVINAIFSVSIALFGIFIASF), and 720–740 (YLFVYLSYVSVFLVVIYYFVL).

Belongs to the complex I subunit 5 family. In terms of assembly, NDH is composed of at least 16 different subunits, 5 of which are encoded in the nucleus.

The protein localises to the plastid. It is found in the chloroplast thylakoid membrane. It catalyses the reaction a plastoquinone + NADH + (n+1) H(+)(in) = a plastoquinol + NAD(+) + n H(+)(out). The enzyme catalyses a plastoquinone + NADPH + (n+1) H(+)(in) = a plastoquinol + NADP(+) + n H(+)(out). NDH shuttles electrons from NAD(P)H:plastoquinone, via FMN and iron-sulfur (Fe-S) centers, to quinones in the photosynthetic chain and possibly in a chloroplast respiratory chain. The immediate electron acceptor for the enzyme in this species is believed to be plastoquinone. Couples the redox reaction to proton translocation, and thus conserves the redox energy in a proton gradient. The chain is NAD(P)H-quinone oxidoreductase subunit 5, chloroplastic (ndhF) from Piper cenocladum (Ant piper).